We begin with the raw amino-acid sequence, 465 residues long: Cysteine--tRNA ligase (465 aa).

Residue C28 coordinates Zn(2+). Residues 30–40 (PTVYNYIHVGN) carry the 'HIGH' region motif. The Zn(2+) site is built by C208, H233, and E237. The 'KMSKS' region signature appears at 265 to 269 (KMSKS). K268 contacts ATP.

It belongs to the class-I aminoacyl-tRNA synthetase family. As to quaternary structure, monomer. Zn(2+) is required as a cofactor.

It localises to the cytoplasm. It carries out the reaction tRNA(Cys) + L-cysteine + ATP = L-cysteinyl-tRNA(Cys) + AMP + diphosphate. This Exiguobacterium sp. (strain ATCC BAA-1283 / AT1b) protein is Cysteine--tRNA ligase.